The chain runs to 378 residues: Succinyl-diaminopimelate desuccinylase (378 aa).

H68 provides a ligand contact to Zn(2+). D70 is a catalytic residue. Residue D101 coordinates Zn(2+). Catalysis depends on E135, which acts as the Proton acceptor. The Zn(2+) site is built by E136, E164, and H350.

Belongs to the peptidase M20A family. DapE subfamily. As to quaternary structure, homodimer. Zn(2+) serves as cofactor. Co(2+) is required as a cofactor.

It catalyses the reaction N-succinyl-(2S,6S)-2,6-diaminopimelate + H2O = (2S,6S)-2,6-diaminopimelate + succinate. Its pathway is amino-acid biosynthesis; L-lysine biosynthesis via DAP pathway; LL-2,6-diaminopimelate from (S)-tetrahydrodipicolinate (succinylase route): step 3/3. Catalyzes the hydrolysis of N-succinyl-L,L-diaminopimelic acid (SDAP), forming succinate and LL-2,6-diaminopimelate (DAP), an intermediate involved in the bacterial biosynthesis of lysine and meso-diaminopimelic acid, an essential component of bacterial cell walls. This chain is Succinyl-diaminopimelate desuccinylase, found in Acinetobacter baumannii (strain ATCC 17978 / DSM 105126 / CIP 53.77 / LMG 1025 / NCDC KC755 / 5377).